The sequence spans 217 residues: Oxygen-evolving enhancer protein 3-1, chloroplastic (217 aa).

Residues 1–68 (MAQAMASMTG…GGALSQAARA (68 aa)) constitute a chloroplast transit peptide.

It belongs to the PsbQ family.

It localises to the plastid. The protein resides in the chloroplast thylakoid membrane. This chain is Oxygen-evolving enhancer protein 3-1, chloroplastic (PSBQ1), found in Zea mays (Maize).